Here is an 86-residue protein sequence, read N- to C-terminus: Exodeoxyribonuclease 7 small subunit (86 aa).

The tract at residues 64–86 is disordered; it reads SNPETVQDKTDTDEPDSNEFSLT.

Belongs to the XseB family. Heterooligomer composed of large and small subunits.

The protein resides in the cytoplasm. It carries out the reaction Exonucleolytic cleavage in either 5'- to 3'- or 3'- to 5'-direction to yield nucleoside 5'-phosphates.. Its function is as follows. Bidirectionally degrades single-stranded DNA into large acid-insoluble oligonucleotides, which are then degraded further into small acid-soluble oligonucleotides. The polypeptide is Exodeoxyribonuclease 7 small subunit (Akkermansia muciniphila (strain ATCC BAA-835 / DSM 22959 / JCM 33894 / BCRC 81048 / CCUG 64013 / CIP 107961 / Muc)).